The chain runs to 391 residues: NADH-quinone oxidoreductase subunit D (391 aa).

The protein belongs to the complex I 49 kDa subunit family. In terms of assembly, NDH-1 is composed of 14 different subunits. Subunits NuoB, C, D, E, F, and G constitute the peripheral sector of the complex.

The protein resides in the cell inner membrane. The catalysed reaction is a quinone + NADH + 5 H(+)(in) = a quinol + NAD(+) + 4 H(+)(out). In terms of biological role, NDH-1 shuttles electrons from NADH, via FMN and iron-sulfur (Fe-S) centers, to quinones in the respiratory chain. The immediate electron acceptor for the enzyme in this species is believed to be ubiquinone. Couples the redox reaction to proton translocation (for every two electrons transferred, four hydrogen ions are translocated across the cytoplasmic membrane), and thus conserves the redox energy in a proton gradient. In Rickettsia rickettsii (strain Iowa), this protein is NADH-quinone oxidoreductase subunit D.